The primary structure comprises 220 residues: Guanylate kinase (220 aa).

One can recognise a Guanylate kinase-like domain in the interval 3–180 (GRLFVMTGAS…AVADFLAILT (178 aa)). ATP is bound at residue 10–17 (GASGVGKG).

This sequence belongs to the guanylate kinase family.

The protein resides in the cytoplasm. It catalyses the reaction GMP + ATP = GDP + ADP. Essential for recycling GMP and indirectly, cGMP. The chain is Guanylate kinase from Thermus thermophilus (strain ATCC BAA-163 / DSM 7039 / HB27).